The primary structure comprises 148 residues: SsrA-binding protein (148 aa).

The tract at residues 129–148 (ETEKDRDWQREKARLMREKA) is disordered.

The protein belongs to the SmpB family.

It localises to the cytoplasm. Functionally, required for rescue of stalled ribosomes mediated by trans-translation. Binds to transfer-messenger RNA (tmRNA), required for stable association of tmRNA with ribosomes. tmRNA and SmpB together mimic tRNA shape, replacing the anticodon stem-loop with SmpB. tmRNA is encoded by the ssrA gene; the 2 termini fold to resemble tRNA(Ala) and it encodes a 'tag peptide', a short internal open reading frame. During trans-translation Ala-aminoacylated tmRNA acts like a tRNA, entering the A-site of stalled ribosomes, displacing the stalled mRNA. The ribosome then switches to translate the ORF on the tmRNA; the nascent peptide is terminated with the 'tag peptide' encoded by the tmRNA and targeted for degradation. The ribosome is freed to recommence translation, which seems to be the essential function of trans-translation. The polypeptide is SsrA-binding protein (Ralstonia nicotianae (strain ATCC BAA-1114 / GMI1000) (Ralstonia solanacearum)).